Reading from the N-terminus, the 187-residue chain is Lipid A acyltransferase PagP (187 aa).

The signal sequence occupies residues Met1–Ser26. Active-site residues include His59, Asp102, and Ser103.

It belongs to the lipid A palmitoyltransferase family. Homodimer.

Its subcellular location is the cell outer membrane. The enzyme catalyses a lipid A + a 1,2-diacyl-sn-glycero-3-phosphocholine = a hepta-acyl lipid A + a 2-acyl-sn-glycero-3-phosphocholine. It catalyses the reaction a lipid IVA + a 1,2-diacyl-sn-glycero-3-phosphocholine = a lipid IVB + a 2-acyl-sn-glycero-3-phosphocholine. It carries out the reaction a lipid IIA + a 1,2-diacyl-sn-glycero-3-phosphocholine = a lipid IIB + a 2-acyl-sn-glycero-3-phosphocholine. Functionally, transfers a fatty acid residue from the sn-1 position of a phospholipid to the N-linked hydroxyfatty acid chain on the proximal unit of lipid A or its precursors. This chain is Lipid A acyltransferase PagP, found in Citrobacter koseri (strain ATCC BAA-895 / CDC 4225-83 / SGSC4696).